The following is a 116-amino-acid chain: Putative iron-sulfur cluster insertion protein ErpA (116 aa).

Residues Cys-44, Cys-108, and Cys-110 each contribute to the iron-sulfur cluster site.

It belongs to the HesB/IscA family. Homodimer. The cofactor is iron-sulfur cluster.

Its function is as follows. Required for insertion of 4Fe-4S clusters. The chain is Putative iron-sulfur cluster insertion protein ErpA from Azoarcus sp. (strain BH72).